Here is a 492-residue protein sequence, read N- to C-terminus: Glutamyl-tRNA(Gln) amidotransferase subunit A (492 aa).

Residues lysine 80 and serine 155 each act as charge relay system in the active site. Catalysis depends on serine 179, which acts as the Acyl-ester intermediate.

This sequence belongs to the amidase family. GatA subfamily. As to quaternary structure, heterotrimer of A, B and C subunits.

The catalysed reaction is L-glutamyl-tRNA(Gln) + L-glutamine + ATP + H2O = L-glutaminyl-tRNA(Gln) + L-glutamate + ADP + phosphate + H(+). Its function is as follows. Allows the formation of correctly charged Gln-tRNA(Gln) through the transamidation of misacylated Glu-tRNA(Gln) in organisms which lack glutaminyl-tRNA synthetase. The reaction takes place in the presence of glutamine and ATP through an activated gamma-phospho-Glu-tRNA(Gln). The chain is Glutamyl-tRNA(Gln) amidotransferase subunit A from Mycobacteroides abscessus (strain ATCC 19977 / DSM 44196 / CCUG 20993 / CIP 104536 / JCM 13569 / NCTC 13031 / TMC 1543 / L948) (Mycobacterium abscessus).